The sequence spans 153 residues: Transcriptional repressor NrdR (153 aa).

Residues 3-34 (CPFCGYEDSKVVDTRPTNEGKTIKRRRECLKC) fold into a zinc finger. An ATP-cone domain is found at 49–139 (ILVIKKDNRR…VYRQFKDINT (91 aa)).

It belongs to the NrdR family. Requires Zn(2+) as cofactor.

Negatively regulates transcription of bacterial ribonucleotide reductase nrd genes and operons by binding to NrdR-boxes. This chain is Transcriptional repressor NrdR, found in Caldicellulosiruptor bescii (strain ATCC BAA-1888 / DSM 6725 / KCTC 15123 / Z-1320) (Anaerocellum thermophilum).